Here is a 2006-residue protein sequence, read N- to C-terminus: METNSSLFGLVSPSSHDLVIERLASVGVPKKYRSKRGLVEFVRANPAKISELVSALLPTDDDVKLGLKEARERPRKSAVSPTMKKRFRESMNMLQWLMFQDEPDVSLRNLAKLNLDQRGVCGSVWGQNDIAYRCRTCENDPTCAICVPCFQNGDHNSHDYSIIYTGGGCCDCGDETAWKPDGFCSNHKGSEQIRPLSENLANSVGPILDALFTCWNNKLLSAESSGQKGARSNDTLVILQKMSNELTFIVVEMLLEFSMSSESLLSFVSRRIISSSGLLSILLKAERFLDQDVMKKLHDLFLKLIGDPVFKCEFAKAFVSYYPVVISEVVKQGTDNAFKKYPLLSTFSVQILTVPTLTPFLVKEMNLLAMLLGCLSDIFVSCSGEDGLLQATKLERLCETSERVIGDLKFVMSHAIVSKYATHEHRELSRSWLTLLTFAQGMNPLKRETGIPIDEENDYMHLFFVLGHSIAVIHSLLVNGTYSAASDEEIENDRNAKEEFDKCDGDGERYAKVGRLSHEDSVCTAIVSSSSFDSSMASEVHKIDPFHALLPSSAIYLIRECLKVLETCLGNDEGISKFLCKLSSSSGRNIPESKMSWPRRDLLNVETGGSVSSNLASSSRDPSTGLSPLCGDIQTNLSLDNVCGPYGVVQTDVTADSKRVSCNSADLTKNASGLRILGLCDWPDIHYDVSSQAISVHLPLHRLLSLLIQKALRICYGESASYNGVSISHEIPHADFFSSVIGDFHPCGFSALVMEHVLQIRVFCAQVIAGMWKKNGDSALVSCEWYRSVRWSEQGLELDLFLLQCCAALAPADSYVDKLLSRFGLSSYLSLNPDITNEYEPVLVQEMLGLLIQILQERRFCGLSTAESLRREIIFKLATGDFTHSQLVKSLPRDLSKSDELQEVLDDVSVYCNPSGMNQGKYSLQSSCWKELDLYHPRWQSRDLQSAEERFSRYCGVSALTTQLPRWRMIYPPLKGLARIGTCKATFQIISSALYYALQSGTSVKSRAPDGVLITALQLLSLSLDICTQQRQSNSQDCCLENSIPILELAGLEIIGIAQGTEKESLLSLLVSLMKTRMGDGRHQFPEPGSCNISSWIGNLLKKFSAIDSVCMNLLQSLAPEVVGQSGFDKVMSGSTSDEKRKAKAKERQAAIMAKMKAEQSKFLSTLSSSMDDDDPRSEFETSDSVMEHDSEIAVREVCSLCHDPDSKDPVSFLIFLQKSKLLSFVDRGPPSWDQCPQSEKKISVDGAPDLLRMNASSDSLRISSPLMLQLSDDTISESANMIESIKARLIGNGQTEKRSSDGRGKDESNMESLEIAMYQTVRNKIENMINQSLTRVDHQPHEAENCSEKNSVGGPSTLQGRFPDIRSRQTSRRPDAGSDGFHPIDCDGVYLSSCGHAVHQSCLERYLKSLKERSGRRTVFEGAHIVDLKKKEFLCPVCRRLANSVLPECPGDLCSVSKLQDSPRTKLRRKDALQPSLWLSEALCLLRSAAEVIEDGDRGKTVTPQGDGPRRKDLKSVSKMLWDFYFPKPEDKTLKRLWLPPQSIVMWDTLKYSLISMEIGTRFAKNSMLPVYCIDSLYEELKTSKGTILSVLLRVVQSSRTKNTIHVRQRFVGMKHLAESICYGVSSSSSSSIFGSEGTTGSLKNIDLLWNRASDPVLAHDPFSSLMWALFCLPFPFLTCEESLLSLVHIFHSVSLVQTVIAYCACRPSELSELNFGENLLNDISNALRESGGWEYFRSNNMDLSCDIKDTIRKYSLPFLRRCALLWKLLKSTPRKLHEESDMFDLPSDPTTDNMDFIYSPQSELNHVQELEKMFNIPPIDIILNDELLRSSTQIWLQHFQREYRVNRVKRSLCITPVVPFQLMKLPNLYQDLLQRCIKKRCVNCTKVIEEPVLCLLCGSLCSPIWSPCCRESGCPNHAITCGAGTGVFLLIRRTTILLQRFARQSPWPSPYLDTFGEEDIDMIRGKRLYLNEERYAALTYLVGSHGLDRSSKVLGQTTIGAVLH.

Residues 119–189 (GVCGSVWGQN…PDGFCSNHKG (71 aa)) form a UBR-type zinc finger. Disordered regions lie at residues 1167–1186 (LSSSMDDDDPRSEFETSDSV) and 1338–1380 (DHQP…AGSD). Residues 1338–1348 (DHQPHEAENCS) are compositionally biased toward basic and acidic residues. Residues 1349–1360 (EKNSVGGPSTLQ) show a composition bias toward polar residues. Residues 1364–1377 (PDIRSRQTSRRPDA) show a composition bias toward basic and acidic residues. The RING-type; degenerate zinc finger occupies 1395 to 1440 (CGHAVHQSCLERYLKSLKERSGRRTVFEGAHIVDLKKKEFLCPVCR).

Belongs to the E3 ubiquitin-protein ligase UBR1-like family.

The enzyme catalyses S-ubiquitinyl-[E2 ubiquitin-conjugating enzyme]-L-cysteine + [acceptor protein]-L-lysine = [E2 ubiquitin-conjugating enzyme]-L-cysteine + N(6)-ubiquitinyl-[acceptor protein]-L-lysine.. It functions in the pathway protein modification; protein ubiquitination. Its function is as follows. Ubiquitin protein ligase which is a component of the N-end rule pathway with arginine specificity, and functions with the arginyltransferases ATE1 and ATE2. Recognizes and binds to proteins bearing specific N-terminal residues that are destabilizing according to the N-end rule, leading to their ubiquitination and subsequent degradation. Does not participate in degradation of proteins with N-terminal Phe or Leu. The N-end rule pathway regulates seed after-ripening, seedling sugar sensitivity, seedling lipid breakdown, and abscisic acid (ABA) sensitivity of germination. The N-end rule pathway regulates various aspects of leaf and shoot development. Involved in the ubiquitination and subsequent degradation of RAP2-12, an activator of hypoxic gene expression. The ubiquitination occurs after the N-arginylation of RAP2-12 by ATE1 or ATE2 under aerobic conditions. The end-rule pathway plays a role in regulating the timing and amplitude of the immune response following infection with the bacterial pathogen Pseudomonas syringae pv tomato. Regulates the biosynthesis of plant-defense metabolites such as glucosinolates, and the biosynthesis and response to the phytohormone jasmonate (JA), which plays a key role in plant immunity. Controls the expression of specific defense-response genes, activates the synthesis pathway for the phytoalexin camalexin, and influences basal resistance to the hemibiotroph pathogen Pseudomonas syringae pv tomato. Coordinates the mobilization of seed storage reserves and regulates the abundance and activities of several proteases following seed germination. This chain is E3 ubiquitin-protein ligase PRT6, found in Arabidopsis thaliana (Mouse-ear cress).